The following is a 66-amino-acid chain: Phylloseptin-S2 (66 aa).

An N-terminal signal peptide occupies residues 1–22 (MAFLKKSLFLVLFLGLVSLSIC). The propeptide occupies 23–46 (EEEKRETEEEEHDQEEDDKSEEKR). The segment at 25 to 44 (EKRETEEEEHDQEEDDKSEE) is disordered. Over residues 30 to 41 (EEEEHDQEEDDK) the composition is skewed to acidic residues. Phe-65 carries the post-translational modification Phenylalanine amide.

Expressed by the skin glands.

It is found in the secreted. Its subcellular location is the target cell membrane. Its function is as follows. Antimicrobial peptide with high activity against Gram-positive bacteria, moderate activity against Gram-negative bacteria, and moderate activity against fungi. Acts by causing bacterial membrane disruption inducing leakage of the intracellular content followed by cell death. It adopts an alpha-helical amphipathic structure in membrane environments. Also shows highly potent antiparasitic activity against Leishmania species. Shows moderate hemolytic activity on human erythrocytes (LC(50)=25 uM). Is also active on human monocytes (IC(50)=22.5 uM). In Phyllomedusa sauvagei (Sauvage's leaf frog), this protein is Phylloseptin-S2.